Reading from the N-terminus, the 256-residue chain is Peptidyl-prolyl cis-trans isomerase FKBP19, chloroplastic (256 aa).

The transit peptide at 1–29 directs the protein to the chloroplast; the sequence is MASISSFGCFPQSTALAGTSSTTRCRTTV. The N-terminal 59 residues, 30–88, are a transit peptide targeting the thylakoid; sequence AARLADQSDDFAPLRSSGGNCGCVNNSGEFDRRKLLVSSVGLLIGALSYDSKDGDFASA. The PPIase FKBP-type domain maps to 135-254; it reads GDKVVVDWDG…LFDVELLKIV (120 aa). Ser164 carries the post-translational modification Phosphoserine.

This sequence belongs to the FKBP-type PPIase family.

The protein resides in the plastid. Its subcellular location is the chloroplast thylakoid lumen. It catalyses the reaction [protein]-peptidylproline (omega=180) = [protein]-peptidylproline (omega=0). In terms of biological role, PPIases accelerate the folding of proteins. It catalyzes the cis-trans isomerization of proline imidic peptide bonds in oligopeptides. This Arabidopsis thaliana (Mouse-ear cress) protein is Peptidyl-prolyl cis-trans isomerase FKBP19, chloroplastic (FKBP19).